A 131-amino-acid chain; its full sequence is Small ribosomal subunit protein bS6 (131 aa).

Residues 92-131 are disordered; that stretch reads RVDEHKDGPSVQMQKRDERERGDRGDRGERRERRDRDDRN.

Belongs to the bacterial ribosomal protein bS6 family.

Its function is as follows. Binds together with bS18 to 16S ribosomal RNA. The protein is Small ribosomal subunit protein bS6 of Paracoccus denitrificans (strain Pd 1222).